We begin with the raw amino-acid sequence, 362 residues long: uncharacterized protein (362 aa).

Over residues 314-323 (GEEKEPKQES) the composition is skewed to basic and acidic residues. The disordered stretch occupies residues 314–362 (GEEKEPKQESQEQLFNPFTIDEMLTEEQQQQQEEENNATEEEGDTVKLG). The segment covering 345 to 356 (QEEENNATEEEG) has biased composition (acidic residues).

This is an uncharacterized protein from Acidianus two-tailed virus (ATV).